A 267-amino-acid polypeptide reads, in one-letter code: GTP cyclohydrolase MptA (267 aa).

The protein belongs to the GTP cyclohydrolase IV family. As to quaternary structure, homodimer. Fe(2+) is required as a cofactor.

It carries out the reaction GTP + H2O = 7,8-dihydroneopterin 2',3'-cyclic phosphate + formate + diphosphate + H(+). It participates in cofactor biosynthesis; 5,6,7,8-tetrahydromethanopterin biosynthesis. In terms of biological role, converts GTP to 7,8-dihydro-D-neopterin 2',3'-cyclic phosphate, the first intermediate in the biosynthesis of coenzyme methanopterin. This chain is GTP cyclohydrolase MptA, found in Thermococcus kodakarensis (strain ATCC BAA-918 / JCM 12380 / KOD1) (Pyrococcus kodakaraensis (strain KOD1)).